A 602-amino-acid chain; its full sequence is Elongation factor 4 (602 aa).

Residues 7-189 (KYIRNFCIIA…KIVDMIPCPE (183 aa)) enclose the tr-type G domain. GTP-binding positions include 19-24 (DHGKST) and 136-139 (NKID).

It belongs to the TRAFAC class translation factor GTPase superfamily. Classic translation factor GTPase family. LepA subfamily.

It is found in the cell membrane. It carries out the reaction GTP + H2O = GDP + phosphate + H(+). In terms of biological role, required for accurate and efficient protein synthesis under certain stress conditions. May act as a fidelity factor of the translation reaction, by catalyzing a one-codon backward translocation of tRNAs on improperly translocated ribosomes. Back-translocation proceeds from a post-translocation (POST) complex to a pre-translocation (PRE) complex, thus giving elongation factor G a second chance to translocate the tRNAs correctly. Binds to ribosomes in a GTP-dependent manner. This is Elongation factor 4 from Ruminiclostridium cellulolyticum (strain ATCC 35319 / DSM 5812 / JCM 6584 / H10) (Clostridium cellulolyticum).